The following is a 1092-amino-acid chain: Fibrinogen-binding protein (1092 aa).

A signal peptide spans 1-51 (MINKKNNLLTKKKPIANKSNKYAIRKFTVGTASIVIGATLLFGLGHNEAKA). The span at 50 to 63 (KAEENSVQDVKDSN) shows a compositional bias: basic and acidic residues. The tract at residues 50 to 236 (KAEENSVQDV…GYTNIDEKIS (187 aa)) is disordered. The segment at 52 to 599 (EENSVQDVKD…GQGQGDLPPE (548 aa)) is ligand binding A region. The segment covering 64 to 76 (TDDELSDSNDQSS) has biased composition (acidic residues). The span at 84–98 (INNNQSINTDDNNQI) shows a compositional bias: low complexity. The span at 99-119 (IKKEETNNYDGIEKRSEDRTE) shows a compositional bias: basic and acidic residues. Positions 120 to 140 (STTNVDENEATFLQKTPQDNT) are enriched in polar residues. The segment covering 141 to 151 (HLTEEEVKESS) has biased composition (basic and acidic residues). Residues 160–170 (IDTAQQPSHTT) show a composition bias toward polar residues. Residues 195–220 (KIKESNTESGKEENTIEQPNKVKEDS) are compositionally biased toward basic and acidic residues. Ca(2+) is bound by residues Glu-294, Ser-299, Val-302, and Glu-309. The segment at 579 to 590 (YDNTIAFSTSSG) is interaction with human fibrinogen. 2 consecutive CNA-B domains span residues 600–713 (KTYK…YQTP) and 714–824 (KYSL…YDDE). Positions 780 to 1068 (KPSGMTQTTT…NEDYGSKGTL (289 aa)) are disordered. The span at 791 to 801 (SGDDDEQDADG) shows a compositional bias: acidic residues. Basic and acidic residues predominate over residues 802–814 (EEVHVTITDHDDF). Over residues 820–1039 (YYDDESDSDS…DSDSDSDNDS (220 aa)) the composition is skewed to acidic residues. Residues 1053–1057 (LPDTG) carry the LPXTG sorting signal motif. Thr-1056 carries the pentaglycyl murein peptidoglycan amidated threonine modification. The propeptide at 1057-1092 (GANEDYGSKGTLLGTLFAGLGALLLGKRRKNRKNKN) is removed by sortase.

This sequence belongs to the serine-aspartate repeat-containing protein (SDr) family.

The protein resides in the secreted. It is found in the cell wall. Its function is as follows. Promotes bacterial attachment to both soluble and immobilized forms of fibrinogen in a dose-dependent manner. This binding occurs through the beta-chain of human fibrinogen. Could contribute to the initiation of foreign-body infection by allowing bacteria to adhere to biomaterial surfaces that have become coated with host proteins after implantation. Is important in the pathogenesis of central venous catheter (CVC)-associated infection model. The sequence is that of Fibrinogen-binding protein (fbe) from Staphylococcus epidermidis.